We begin with the raw amino-acid sequence, 227 residues long: MKLLIVEDEKKTGEYLTKGLTEAGFVVDLADNGLNGYHLAMTGDYDLIILDIMLPDVNGWDIVRMLRSANKGMPILLLTALGTIEHRVKGLELGADDYLVKPFAFAELLARVRTLLRRGAAVIIESQFQVADLMVDLVSRKVTRSGTRITLTSKEFTLLEFFLRHQGEVLPRSLIASQVWDMNFDSDTNAIDVAVKRLRGKIDNDFEPKLIQTVRGVGYMLEVPDGQ.

The Response regulatory domain occupies 2-116; the sequence is KLLIVEDEKK…ELLARVRTLL (115 aa). Asp51 is subject to 4-aspartylphosphate. A DNA-binding region (ompR/PhoB-type) is located at residues 125–223; it reads ESQFQVADLM…VRGVGYMLEV (99 aa).

Post-translationally, phosphorylated by CusS.

It is found in the cytoplasm. Member of the two-component regulatory system CusS/CusR involved in response to copper and silver. The sequence is that of Transcriptional regulatory protein CusR (cusR) from Escherichia coli O6:H1 (strain CFT073 / ATCC 700928 / UPEC).